The following is a 1253-amino-acid chain: Myosin heavy chain 95F (1253 aa).

Residues 3-54 (EDTQLVWVRDAAEGYIQGRITEIGAKEFEVTPTDRKYPKRTCHFDDIHSSCD) form the Myosin N-terminal SH3-like domain. The 710-residue stretch at 57 to 766 (QDHDDNCELM…KFVEFDRIMR (710 aa)) folds into the Myosin motor domain. 151 to 158 (GESGAGKT) serves as a coordination point for ATP. An actin-binding region spans residues 647 to 666 (GELMEKLEQNGTNFIRCIKP). In terms of domain architecture, IQ spans 808–837 (RNKCVLIAQRIARGFLARKQHRPRYQGIGK). Positions 900-1022 (ANMNKLTVDL…LRLANESNGQ (123 aa)) form a coiled coil. The tract at residues 1187–1193 (PILLVAG) is hydrophobic region. Residues 1233–1253 (AYKNLGAAKPNGPAAAMQKQQ) are disordered.

This sequence belongs to the TRAFAC class myosin-kinesin ATPase superfamily. Myosin family. As to expression, isoform B is present at a higher level in the head and gonads than in the thoraxes. Isoform 145 kDa is found only in the head. CLIP-190 and jar are coexpressed at several times in development and in a number of tissues, including embryonic axonal neuron processes and posterior pole.

It is found in the cytoplasm. Its subcellular location is the cytoskeleton. Myosin is a protein that binds to actin and has ATPase activity that is activated by actin. Together CLIP-190 and jar may coordinate the interaction between the actin and microtubule cytoskeleton. May link endocytic vesicles to microtubules and may be involved in transport in the early embryo and in the dynamic process of dorsal closure. It is believed that its function changes during the life cycle. The polypeptide is Myosin heavy chain 95F (jar) (Drosophila melanogaster (Fruit fly)).